A 295-amino-acid chain; its full sequence is Proline-rich protein 32 (295 aa).

Disordered regions lie at residues 10-48 (GHAP…GHPG) and 101-120 (ATGE…SGQD).

This is Proline-rich protein 32 (PRR32) from Bos taurus (Bovine).